Reading from the N-terminus, the 235-residue chain is Glycerol-3-phosphate acyltransferase (235 aa).

The next 6 helical transmembrane spans lie at 4–24 (LIAILAISYLVGAIPTGIMAG), 56–76 (AVTLLDILKGIVAAVSIVAFF), 94–114 (LLAGMSAVIGHVFTVFAGFKG), 122–142 (AGMLIGIAPVSMLIVIGIFLL), 152–172 (VASILAAIAFPLIIAIRKYIF), and 191–211 (FHDSLDYHLMIFGLIVALAIL).

This sequence belongs to the PlsY family. In terms of assembly, probably interacts with PlsX.

It localises to the cell inner membrane. The enzyme catalyses an acyl phosphate + sn-glycerol 3-phosphate = a 1-acyl-sn-glycero-3-phosphate + phosphate. Its pathway is lipid metabolism; phospholipid metabolism. Catalyzes the transfer of an acyl group from acyl-phosphate (acyl-PO(4)) to glycerol-3-phosphate (G3P) to form lysophosphatidic acid (LPA). This enzyme utilizes acyl-phosphate as fatty acyl donor, but not acyl-CoA or acyl-ACP. The sequence is that of Glycerol-3-phosphate acyltransferase from Chlorobium phaeobacteroides (strain DSM 266 / SMG 266 / 2430).